The following is a 284-amino-acid chain: L-ribulose-5-phosphate 3-epimerase UlaE (284 aa).

This sequence belongs to the L-ribulose-5-phosphate 3-epimerase family.

It catalyses the reaction L-ribulose 5-phosphate = L-xylulose 5-phosphate. Its pathway is cofactor degradation; L-ascorbate degradation; D-xylulose 5-phosphate from L-ascorbate: step 3/4. Its function is as follows. Catalyzes the isomerization of L-xylulose-5-phosphate to L-ribulose-5-phosphate. Is involved in the anaerobic L-ascorbate utilization. This chain is L-ribulose-5-phosphate 3-epimerase UlaE, found in Escherichia coli O17:K52:H18 (strain UMN026 / ExPEC).